Consider the following 389-residue polypeptide: Adenylyltransferase and sulfurtransferase uba4 (389 aa).

ATP is bound by residues glycine 40, aspartate 61, 68–72 (SNLHR), lysine 85, and 129–130 (DT). Zn(2+) is bound by residues cysteine 171 and cysteine 174. Cysteine 188 acts as the Glycyl thioester intermediate; for adenylyltransferase activity in catalysis. Cysteine 252 and cysteine 255 together coordinate Zn(2+). The region spanning 298-387 (AQRAPYLVDV…WSRQIDPNFP (90 aa)) is the Rhodanese domain. The active-site Cysteine persulfide intermediate is the cysteine 347.

This sequence in the N-terminal section; belongs to the HesA/MoeB/ThiF family. UBA4 subfamily. Zn(2+) is required as a cofactor.

The protein resides in the cytoplasm. Its subcellular location is the cytosol. The enzyme catalyses [molybdopterin-synthase sulfur-carrier protein]-C-terminal Gly-Gly + ATP + H(+) = [molybdopterin-synthase sulfur-carrier protein]-C-terminal Gly-Gly-AMP + diphosphate. The catalysed reaction is [molybdopterin-synthase sulfur-carrier protein]-C-terminal Gly-Gly-AMP + S-sulfanyl-L-cysteinyl-[cysteine desulfurase] + AH2 = [molybdopterin-synthase sulfur-carrier protein]-C-terminal-Gly-aminoethanethioate + L-cysteinyl-[cysteine desulfurase] + A + AMP + 2 H(+). It functions in the pathway tRNA modification; 5-methoxycarbonylmethyl-2-thiouridine-tRNA biosynthesis. The protein operates within cofactor biosynthesis; molybdopterin biosynthesis. Plays a central role in 2-thiolation of mcm(5)S(2)U at tRNA wobble positions of cytosolic tRNA(Lys), tRNA(Glu) and tRNA(Gln). Also essential during biosynthesis of the molybdenum cofactor. Acts by mediating the C-terminal thiocarboxylation of sulfur carriers URM1 and CNX5/MOCS2A. Its N-terminus first activates urm1 and mocs2a as acyl-adenylates (-COAMP), then the persulfide sulfur on the catalytic cysteine is transferred to URM1 and CNX5/MOCS2A to form thiocarboxylation (-COSH) of their C-terminus. The reaction probably involves hydrogen sulfide that is generated from the persulfide intermediate and that acts as a nucleophile towards URM1 and CNX5/MOCS2A. Subsequently, a transient disulfide bond is formed. Does not use thiosulfate as sulfur donor; NFS1 probably acting as a sulfur donor for thiocarboxylation reactions. Required for growth on nitrate as a sole nitrogen source. The polypeptide is Adenylyltransferase and sulfurtransferase uba4 (Ogataea parapolymorpha (strain ATCC 26012 / BCRC 20466 / JCM 22074 / NRRL Y-7560 / DL-1) (Yeast)).